Here is a 260-residue protein sequence, read N- to C-terminus: Purine nucleoside phosphorylase XF_0940 (260 aa).

Residues histidine 79, cysteine 120, and histidine 137 each coordinate Zn(2+).

Belongs to the purine nucleoside phosphorylase YfiH/LACC1 family. Homodimer. The cofactor is Cu(2+). Zn(2+) serves as cofactor.

It catalyses the reaction adenosine + phosphate = alpha-D-ribose 1-phosphate + adenine. It carries out the reaction S-methyl-5'-thioadenosine + phosphate = 5-(methylsulfanyl)-alpha-D-ribose 1-phosphate + adenine. The catalysed reaction is inosine + phosphate = alpha-D-ribose 1-phosphate + hypoxanthine. The enzyme catalyses adenosine + H2O + H(+) = inosine + NH4(+). Its function is as follows. Purine nucleoside enzyme that catalyzes the phosphorolysis of adenosine and inosine nucleosides, yielding D-ribose 1-phosphate and the respective free bases, adenine and hypoxanthine. Also catalyzes the phosphorolysis of S-methyl-5'-thioadenosine into adenine and S-methyl-5-thio-alpha-D-ribose 1-phosphate. Also has adenosine deaminase activity. This is Purine nucleoside phosphorylase XF_0940 from Xylella fastidiosa (strain 9a5c).